The sequence spans 290 residues: Ribosomal RNA small subunit methyltransferase A (290 aa).

Asn27, Leu29, Gly54, Glu75, Asp100, and Asn125 together coordinate S-adenosyl-L-methionine.

Belongs to the class I-like SAM-binding methyltransferase superfamily. rRNA adenine N(6)-methyltransferase family. RsmA subfamily.

Its subcellular location is the cytoplasm. The catalysed reaction is adenosine(1518)/adenosine(1519) in 16S rRNA + 4 S-adenosyl-L-methionine = N(6)-dimethyladenosine(1518)/N(6)-dimethyladenosine(1519) in 16S rRNA + 4 S-adenosyl-L-homocysteine + 4 H(+). Specifically dimethylates two adjacent adenosines (A1518 and A1519) in the loop of a conserved hairpin near the 3'-end of 16S rRNA in the 30S particle. May play a critical role in biogenesis of 30S subunits. The polypeptide is Ribosomal RNA small subunit methyltransferase A (Streptococcus thermophilus (strain ATCC BAA-491 / LMD-9)).